Consider the following 611-residue polypeptide: Probable inactive purple acid phosphatase 27 (611 aa).

Positions 1-18 (MARNFLLVLLWFIVQVSS) are cleaved as a signal peptide. Residues asparagine 263 and asparagine 271 are each glycosylated (N-linked (GlcNAc...) asparagine). Position 293 (aspartate 293) interacts with Fe cation. N-linked (GlcNAc...) asparagine glycosylation is present at asparagine 314. Fe cation contacts are provided by aspartate 334 and tyrosine 337. A Zn(2+)-binding site is contributed by aspartate 334. Asparagine 367, histidine 456, and histidine 498 together coordinate Zn(2+). Residue asparagine 367 participates in substrate binding. 498–500 (HVH) lines the substrate pocket. Residue histidine 500 coordinates Fe cation.

The protein belongs to the metallophosphoesterase superfamily. Purple acid phosphatase family. In terms of assembly, homodimer. It depends on Fe cation as a cofactor. Requires Zn(2+) as cofactor. In terms of tissue distribution, expressed in roots, stems, leaves, flowers and siliques.

It is found in the secreted. The polypeptide is Probable inactive purple acid phosphatase 27 (PAP27) (Arabidopsis thaliana (Mouse-ear cress)).